A 137-amino-acid chain; its full sequence is Peptide methionine sulfoxide reductase MsrB (137 aa).

A MsrB domain is found at 7–129 (AEELKKKLSE…NSASLAFSDE (123 aa)). Residues C46, C49, C95, and C98 each contribute to the Zn(2+) site. C118 serves as the catalytic Nucleophile.

The protein belongs to the MsrB Met sulfoxide reductase family. Requires Zn(2+) as cofactor.

It carries out the reaction L-methionyl-[protein] + [thioredoxin]-disulfide + H2O = L-methionyl-(R)-S-oxide-[protein] + [thioredoxin]-dithiol. This is Peptide methionine sulfoxide reductase MsrB from Salmonella agona (strain SL483).